The sequence spans 1039 residues: Antigenic heat-stable 120 kDa protein (1039 aa).

Disordered stretches follow at residues 1–115 (MSKD…TSDP), 408–438 (SSIE…MPQP), and 1020–1039 (QSEN…FPPR). The segment covering 31–44 (PISSTANKDGNPDT) has biased composition (polar residues). The segment covering 54–69 (EYTEEQKQKLEQEQKE) has biased composition (basic and acidic residues). A compositionally biased stretch (low complexity) spans 85–114 (FSFTPASSTQSTPSISSLSGGISSDSQTSD). The span at 424 to 438 (ANQPLQPETSQMPQP) shows a compositional bias: polar residues. The span at 1030–1039 (IKRESSFPPR) shows a compositional bias: basic and acidic residues.

The protein resides in the cytoplasm. The protein is Antigenic heat-stable 120 kDa protein (sca4) of Rickettsia felis (strain ATCC VR-1525 / URRWXCal2) (Rickettsia azadi).